A 101-amino-acid polypeptide reads, in one-letter code: Protein S100-A4 (101 aa).

A2 is subject to N-acetylalanine. 2 consecutive EF-hand domains span residues 12-47 (IVSTFHKYSGNEGDKFKLNKTELKELLTRELPSFLG) and 50-85 (TDEAAFQKLMNNLDSNRDNEVDFQEYCVFLSCIAMM). Ca(2+) is bound by residues K28 and E33. Position 35 is an N6-acetyllysine (K35). D63, N65, D67, E69, and E74 together coordinate Ca(2+).

This sequence belongs to the S-100 family. As to quaternary structure, homodimer. Interacts with PPFIBP1 in a calcium-dependent mode. Interacts with PGLYRP1; this complex acts as a chemoattractant that promotes lymphocyte movement. Interacts with MYH9; this interaction increases cell motility. Interacts with Annexin 2/ANXA2. Interacts with TP53; this interaction promotes TP53 degradation. Interacts with CCR5 and CXCR3. Interacts with FCGR3A; this interaction inhibits PKC-dependent phosphorylation of FCGR3A.

It is found in the secreted. It localises to the nucleus. Its subcellular location is the cytoplasm. Calcium-binding protein that plays a role in various cellular processes including motility, angiogenesis, cell differentiation, apoptosis, and autophagy. Increases cell motility and invasiveness by interacting with non-muscle myosin heavy chain (NMMHC) IIA/MYH9. Mechanistically, promotes filament depolymerization and increases the amount of soluble myosin-IIA, resulting in the formation of stable protrusions facilitating chemotaxis. Also modulates the pro-apoptotic function of TP53 by binding to its C-terminal transactivation domain within the nucleus and reducing its protein levels. Within the extracellular space, stimulates cytokine production including granulocyte colony-stimulating factor and CCL24 from T-lymphocytes. In addition, stimulates T-lymphocyte chemotaxis by acting as a chemoattractant complex with PGLYRP1 that promotes lymphocyte migration via CCR5 and CXCR3 receptors. The polypeptide is Protein S100-A4 (S100a4) (Rattus norvegicus (Rat)).